The primary structure comprises 281 residues: MGQKINPHGFRLGITTGWKSRWYADKQYAEYVKEDVAIRRLLSTGLERAGIADVEIERTRDRVRVDIHTARPGIVIGRRGTEADRIRADLEKLTCKQVQLNILEVKNPESQAQLVAQGVAEQLSNRVAFRRAMRKAIQSAMRQPNVKGIRVQCSGRLGGAEMSRSEFYREGRVPLHTLRADIDYGLHEAKTTFGRIGVKVWIYKGDIVGGKREVTAVAPAGAERARRERPSGTRPRRSGAAGTTVTGTDAGRAVGGEESAATNIGHSDDSVVTHEPQIAES.

Positions 38 to 106 (IRRLLSTGLE…QVQLNILEVK (69 aa)) constitute a KH type-2 domain. Residues 218–281 (APAGAERARR…VTHEPQIAES (64 aa)) are disordered. Residues 238 to 252 (SGAAGTTVTGTDAGR) show a composition bias toward low complexity.

This sequence belongs to the universal ribosomal protein uS3 family. As to quaternary structure, part of the 30S ribosomal subunit. Forms a tight complex with proteins S10 and S14.

Binds the lower part of the 30S subunit head. Binds mRNA in the 70S ribosome, positioning it for translation. In Mycobacterium leprae (strain TN), this protein is Small ribosomal subunit protein uS3.